Reading from the N-terminus, the 474-residue chain is Glutamate--tRNA ligase (474 aa).

Positions P10–G20 match the 'HIGH' region motif. Residues C107, C109, C134, and D136 each contribute to the Zn(2+) site. A 'KMSKS' region motif is present at residues R244 to R248. K247 is an ATP binding site.

The protein belongs to the class-I aminoacyl-tRNA synthetase family. Glutamate--tRNA ligase type 1 subfamily. Monomer. It depends on Zn(2+) as a cofactor.

The protein resides in the cytoplasm. It catalyses the reaction tRNA(Glu) + L-glutamate + ATP = L-glutamyl-tRNA(Glu) + AMP + diphosphate. In terms of biological role, catalyzes the attachment of glutamate to tRNA(Glu) in a two-step reaction: glutamate is first activated by ATP to form Glu-AMP and then transferred to the acceptor end of tRNA(Glu). The protein is Glutamate--tRNA ligase of Anaeromyxobacter sp. (strain K).